Here is a 433-residue protein sequence, read N- to C-terminus: Glutamate-1-semialdehyde 2,1-aminomutase (433 aa).

Lys270 is modified (N6-(pyridoxal phosphate)lysine).

The protein belongs to the class-III pyridoxal-phosphate-dependent aminotransferase family. HemL subfamily. As to quaternary structure, homodimer. It depends on pyridoxal 5'-phosphate as a cofactor.

It localises to the cytoplasm. The enzyme catalyses (S)-4-amino-5-oxopentanoate = 5-aminolevulinate. It participates in porphyrin-containing compound metabolism; protoporphyrin-IX biosynthesis; 5-aminolevulinate from L-glutamyl-tRNA(Glu): step 2/2. The protein is Glutamate-1-semialdehyde 2,1-aminomutase of Symbiobacterium thermophilum (strain DSM 24528 / JCM 14929 / IAM 14863 / T).